The sequence spans 6995 residues: Fibrous sheath-interacting protein 2 (6995 aa).

Disordered regions lie at residues 273–292, 308–336, and 351–476; these read EQKI…RKKQ, DTGL…SSKK, and GDQK…TDAP. Polar residues predominate over residues 359–396; that stretch reads TSGQVSATVNQSQSSSKDVTKVSASSVTYPAEVQNSSS. The span at 397 to 421 shows a compositional bias: basic and acidic residues; that stretch reads EQKRSEVTKRLSDERGKNSTDDSAR. Polar residues predominate over residues 424–442; sequence IISTQLSPTRNAKLSQISL. A Phosphoserine modification is found at Ser-430. Over residues 443–452 the composition is skewed to basic and acidic residues; the sequence is DHQKEEKEMK. The segment covering 453 to 463 has biased composition (polar residues); that stretch reads STWNGGLSKKS. A coiled-coil region spans residues 665 to 692; that stretch reads LEISLLYDKKAKAMDQIKNLKNVFVNFK. Disordered stretches follow at residues 1452-1472, 2554-2595, 2699-2731, 3182-3270, 5489-5665, 5719-5740, 5823-5878, 5943-5996, and 6973-6995; these read PDPQ…DPPT, KSKR…VPQM, TKTK…TPQV, PVKM…PNFT, GPSA…KYKG, SKSS…MTEK, KDLS…SKSK, KEDE…PDKL, and SKVF…QDKR. Over residues 2555-2565 the composition is skewed to basic and acidic residues; that stretch reads SKREGEMHDSS. Residues 3187-3204 show a composition bias toward polar residues; the sequence is PSNTSDTPRTRRSSQGSV. Over residues 3220-3231 the composition is skewed to low complexity; it reads SVTSNSSSHISS. The span at 3232 to 3250 shows a compositional bias: polar residues; it reads CVENTNKSLEPMGRSNSEA. Residues 3255 to 3265 are compositionally biased toward basic residues; it reads SRHKAHDHGQR. The segment covering 5496–5509 has biased composition (basic and acidic residues); it reads DAKKEDESKVKPAT. Composition is skewed to polar residues over residues 5523 to 5557, 5565 to 5625, and 5638 to 5650; these read MKSQ…SPPT, QVQQ…QSAM, and VQES…TTMK. 2 stretches are compositionally biased toward basic and acidic residues: residues 5719–5738 and 5829–5877; these read SKSS…ETMT and GHRD…ESKS. Polar residues predominate over residues 5982–5993; that stretch reads SDVQKTPEQSSP. The span at 6977–6995 shows a compositional bias: low complexity; that stretch reads SRSSGSIPKSSSPPHQDKR.

As to quaternary structure, may interact with AKAP4. As to expression, predominantly expressed in testis.

Its function is as follows. Plays a role in spermatogenesis. In Mus musculus (Mouse), this protein is Fibrous sheath-interacting protein 2 (Fsip2).